The following is a 120-amino-acid chain: NAD(P)H-quinone oxidoreductase subunit 3, chloroplastic (120 aa).

3 helical membrane passes run 9–29 (IFWA…LISG), 64–84 (MFAL…PWAM), and 88–108 (VLGV…IVGS).

The protein belongs to the complex I subunit 3 family. NDH is composed of at least 16 different subunits, 5 of which are encoded in the nucleus.

It is found in the plastid. Its subcellular location is the chloroplast thylakoid membrane. It carries out the reaction a plastoquinone + NADH + (n+1) H(+)(in) = a plastoquinol + NAD(+) + n H(+)(out). It catalyses the reaction a plastoquinone + NADPH + (n+1) H(+)(in) = a plastoquinol + NADP(+) + n H(+)(out). Functionally, NDH shuttles electrons from NAD(P)H:plastoquinone, via FMN and iron-sulfur (Fe-S) centers, to quinones in the photosynthetic chain and possibly in a chloroplast respiratory chain. The immediate electron acceptor for the enzyme in this species is believed to be plastoquinone. Couples the redox reaction to proton translocation, and thus conserves the redox energy in a proton gradient. The chain is NAD(P)H-quinone oxidoreductase subunit 3, chloroplastic from Illicium oligandrum (Star anise).